Here is a 166-residue protein sequence, read N- to C-terminus: ATP synthase subunit b 1 (166 aa).

A helical membrane pass occupies residues 7-29 (FWTALAFVLFFVIFGRKLWVAIT).

This sequence belongs to the ATPase B chain family. As to quaternary structure, F-type ATPases have 2 components, F(1) - the catalytic core - and F(0) - the membrane proton channel. F(1) has five subunits: alpha(3), beta(3), gamma(1), delta(1), epsilon(1). F(0) has three main subunits: a(1), b(2) and c(10-14). The alpha and beta chains form an alternating ring which encloses part of the gamma chain. F(1) is attached to F(0) by a central stalk formed by the gamma and epsilon chains, while a peripheral stalk is formed by the delta and b chains.

The protein localises to the cell inner membrane. In terms of biological role, f(1)F(0) ATP synthase produces ATP from ADP in the presence of a proton or sodium gradient. F-type ATPases consist of two structural domains, F(1) containing the extramembraneous catalytic core and F(0) containing the membrane proton channel, linked together by a central stalk and a peripheral stalk. During catalysis, ATP synthesis in the catalytic domain of F(1) is coupled via a rotary mechanism of the central stalk subunits to proton translocation. Component of the F(0) channel, it forms part of the peripheral stalk, linking F(1) to F(0). This chain is ATP synthase subunit b 1, found in Gluconobacter oxydans (strain 621H) (Gluconobacter suboxydans).